The chain runs to 561 residues: DNA ligase (561 aa).

An ATP-binding site is contributed by E247. K249 (N6-AMP-lysine intermediate) is an active-site residue. ATP contacts are provided by R254, R269, E299, F339, R414, and K420.

It belongs to the ATP-dependent DNA ligase family. In terms of assembly, monomer. The cofactor is Mg(2+).

It catalyses the reaction ATP + (deoxyribonucleotide)n-3'-hydroxyl + 5'-phospho-(deoxyribonucleotide)m = (deoxyribonucleotide)n+m + AMP + diphosphate.. Functionally, DNA ligase that seals nicks in double-stranded DNA during DNA replication, DNA recombination and DNA repair. The sequence is that of DNA ligase from Pyrococcus furiosus (strain ATCC 43587 / DSM 3638 / JCM 8422 / Vc1).